Here is a 352-residue protein sequence, read N- to C-terminus: Tropomodulin-3 (352 aa).

A Phosphoserine modification is found at Ser-25.

This sequence belongs to the tropomodulin family. As to quaternary structure, binds to the N-terminus of tropomyosin and to actin. Interacts with FLII. In terms of tissue distribution, ubiquitous.

Its subcellular location is the cytoplasm. It localises to the cytoskeleton. In terms of biological role, blocks the elongation and depolymerization of the actin filaments at the pointed end. The Tmod/TM complex contributes to the formation of the short actin protofilament, which in turn defines the geometry of the membrane skeleton. In Mus musculus (Mouse), this protein is Tropomodulin-3 (Tmod3).